Consider the following 121-residue polypeptide: Basic phospholipase A2 VRV-PL-VIIIa (121 aa).

Intrachain disulfides connect Cys26-Cys115, Cys28-Cys44, Cys43-Cys95, Cys49-Cys121, Cys50-Cys88, Cys57-Cys81, and Cys75-Cys86. Ca(2+) contacts are provided by Tyr27, Gly29, and Gly31. The active site involves His47. Residue Asp48 coordinates Ca(2+). Asp89 is an active-site residue.

This sequence belongs to the phospholipase A2 family. Group II subfamily. D49 sub-subfamily. As to quaternary structure, monomer. Ca(2+) serves as cofactor. In terms of tissue distribution, expressed by the venom gland.

Its subcellular location is the secreted. It carries out the reaction a 1,2-diacyl-sn-glycero-3-phosphocholine + H2O = a 1-acyl-sn-glycero-3-phosphocholine + a fatty acid + H(+). Oxyphenbutazone (OPB), anisic acid and atropine inhibit the enzymatic activity by binding at the substrate-binding site. P-coumaric acid, resveratrol, spermidine, corticosterone and gramine derivative inhibit the enzymatic activity by binding at the substrate-binding site. Snake venom phospholipase A2 (PLA2) that shows weak neurotoxicity and medium anticoagulant effects by binding to factor Xa (F10) and inhibiting the prothrombinase activity (IC(50) is 130 nM). It also damages vital organs such as lung, liver and kidney, displays edema-inducing activities when injected into the foot pads of mice and induces necrosis of muscle cells when injected into the thigh muscle. Has a low enzymatic activity. PLA2 catalyzes the calcium-dependent hydrolysis of the 2-acyl groups in 3-sn-phosphoglycerides. The polypeptide is Basic phospholipase A2 VRV-PL-VIIIa (Daboia russelii (Russel's viper)).